The sequence spans 302 residues: MQTLLNEILEEVRPLIGKGKVADYIPALADVPANQLGIAVYGNDGSYHCAGDARVPFSVQSISKVFSLVQAIGHSGEAIWERLGHEPSGQPFNSLVQLEFERGRPRNPFINAGALVICDINQSRFAAPTLSMRDFVRRLSGNPHISINTRVADSEYQFRARNAAMAYLMQSFGNFHNEVETVLRSYFSYCALQMNCLDLARAFCFLANDGFCKHSGEQILTRRQTQQVNSIMATSGLYDEAGNFAFRVGLPGKSGVGGGIVAIVPGQFTVCVWSPELNAAGNSLAGMAALELLSSRIGWSVF.

Positions 61, 111, 155, 162, 186, 238, and 256 each coordinate substrate.

Belongs to the glutaminase family. As to quaternary structure, homotetramer.

It catalyses the reaction L-glutamine + H2O = L-glutamate + NH4(+). This is Glutaminase from Pseudomonas putida (strain ATCC 700007 / DSM 6899 / JCM 31910 / BCRC 17059 / LMG 24140 / F1).